The sequence spans 392 residues: Lipid-A-disaccharide synthase (392 aa).

The protein belongs to the LpxB family.

It carries out the reaction a lipid X + a UDP-2-N,3-O-bis[(3R)-3-hydroxyacyl]-alpha-D-glucosamine = a lipid A disaccharide + UDP + H(+). It participates in bacterial outer membrane biogenesis; LPS lipid A biosynthesis. In terms of biological role, condensation of UDP-2,3-diacylglucosamine and 2,3-diacylglucosamine-1-phosphate to form lipid A disaccharide, a precursor of lipid A, a phosphorylated glycolipid that anchors the lipopolysaccharide to the outer membrane of the cell. The sequence is that of Lipid-A-disaccharide synthase from Syntrophotalea carbinolica (strain DSM 2380 / NBRC 103641 / GraBd1) (Pelobacter carbinolicus).